The sequence spans 132 residues: MSFIKEFKEFAVKGNVIDMAVGVVIGSAFGKIVSSLVGDVIMPVVGVLTGGVNFTDLKITIKEAVGENAAVTINYGNFIQVTIDFLIIAFCIFLAIKAINQLKKPEKQEPKAPAEPNDEVKLLSEIRDLLKK.

The next 2 membrane-spanning stretches (helical) occupy residues 10-30 (FAVK…SAFG) and 76-96 (GNFI…FLAI).

This sequence belongs to the MscL family. As to quaternary structure, homopentamer.

It is found in the cell inner membrane. Channel that opens in response to stretch forces in the membrane lipid bilayer. May participate in the regulation of osmotic pressure changes within the cell. The protein is Large-conductance mechanosensitive channel of Campylobacter hominis (strain ATCC BAA-381 / DSM 21671 / CCUG 45161 / LMG 19568 / NCTC 13146 / CH001A).